A 250-amino-acid polypeptide reads, in one-letter code: Probable xyloglucan-specific endo-beta-1,4-glucanase A (250 aa).

A signal peptide spans 1–19 (MKLSVLSLASLASAAALNA). N-linked (GlcNAc...) asparagine glycosylation is present at Asn72.

It belongs to the glycosyl hydrolase 12 (cellulase H) family.

Its subcellular location is the secreted. It catalyses the reaction xyloglucan + H2O = xyloglucan oligosaccharides.. Its function is as follows. Catalyzes endohydrolysis of 1,4-beta-D-glucosidic linkages in xyloglucan with retention of the beta-configuration of the glycosyl residues. Specific for xyloglucan and does not hydrolyze other cell wall components. The chain is Probable xyloglucan-specific endo-beta-1,4-glucanase A (xgeA) from Aspergillus terreus (strain NIH 2624 / FGSC A1156).